The chain runs to 356 residues: Protein HEXIM1 (356 aa).

2 stretches are compositionally biased toward basic and acidic residues: residues 1–11 (MAEPLLSEHQH) and 24–47 (VHEE…DSRW). The tract at residues 1–160 (MAEPLLSEHQ…RRRPSKKKRH (160 aa)) is disordered. The span at 48-58 (QSRASLQSGSR) shows a compositional bias: polar residues. Over residues 84–93 (CLEKGEKGQN) the composition is skewed to basic and acidic residues. Residues S98 and S103 each carry the phosphoserine modification. The segment covering 145–160 (LGKKKHRRRPSKKKRH) has biased composition (basic residues). The segment at 147 to 174 (KKKHRRRPSKKKRHWKPYYKLTWEEKKK) is basic region; mediates nuclear localization and interaction with 7SK snRNA and NR3C1. Residues 199–202 (PYNT) form an interaction with P-TEFb region. An autoinhibitory acidic region; in absence of 7SK snRNA interacts with the basic region preventing interaction with P-TEFb and modulating subcellular localization region spans residues 207-247 (MDDHDQEEPDLKTGLYPKRAAAKSDDTSDEDFVEEAGEEDG). Positions 209-259 (DHDQEEPDLKTGLYPKRAAAKSDDTSDEDFVEEAGEEDGGSDGMGGDGSEF) are disordered. Phosphoserine is present on S230. Phosphothreonine is present on T233. Residues 233–248 (TSDEDFVEEAGEEDGG) show a composition bias toward acidic residues. Residues S234, S249, and S257 each carry the phosphoserine modification. Residues 280-346 (SKQELIKEYL…LTENELHRQQ (67 aa)) adopt a coiled-coil conformation. The tract at residues 283-311 (ELIKEYLELEKCLSRKEDENNRLRLESKR) is mediates interaction with CCNT1. The tract at residues 307–352 (LESKRLGGVDARVRELELELDRLRAENRQLLTENELHRQQERAPPS) is required for inhibition of ESR1-dependent transcription. Residues 337–356 (LTENELHRQQERAPPSKFGD) are disordered.

Belongs to the HEXIM family. Homooligomer and heterooligomer with HEXIM2; probably dimeric. Core component of the 7SK RNP complex, at least composed of 7SK RNA, LARP7, MEPCE, HEXIM1 (or HEXIM2) and P-TEFb (composed of CDK9 and CCNT1/cyclin-T1). Interacts with the N-CoR complex through NCOR1. Interacts with ESR1 and NR3C1. May interact with NF-kappa-B through RELA. Interacts with CCNT2; mediates formation of a tripartite complex with KPNA2. Part of the HDP-RNP complex composed of at least HEXIM1, PRKDC, XRCC5, XRCC6, paraspeckle proteins (SFPQ, NONO, PSPC1, RBM14, and MATR3) and NEAT1 non-coding RNA.

It localises to the nucleus. It is found in the cytoplasm. In terms of biological role, transcriptional regulator which functions as a general RNA polymerase II transcription inhibitor. Core component of the 7SK RNP complex: in cooperation with 7SK snRNA sequesters P-TEFb in a large inactive 7SK snRNP complex preventing RNA polymerase II phosphorylation and subsequent transcriptional elongation. May also regulate NF-kappa-B, ESR1, NR3C1 and CIITA-dependent transcriptional activity. Plays a role in the regulation of DNA virus-mediated innate immune response by assembling into the HDP-RNP complex, a complex that serves as a platform for IRF3 phosphorylation and subsequent innate immune response activation through the cGAS-STING pathway. The chain is Protein HEXIM1 (Hexim1) from Rattus norvegicus (Rat).